The following is a 104-amino-acid chain: Large ribosomal subunit protein bL21 (104 aa).

It belongs to the bacterial ribosomal protein bL21 family. As to quaternary structure, part of the 50S ribosomal subunit. Contacts protein L20.

In terms of biological role, this protein binds to 23S rRNA in the presence of protein L20. This chain is Large ribosomal subunit protein bL21, found in Streptococcus sanguinis (strain SK36).